Here is a 225-residue protein sequence, read N- to C-terminus: Large ribosomal subunit protein mL58 (225 aa).

Positions 106-138 (PQAPITTPESSSTDAAAADQHGDLPPVLYNPTK) are disordered. The segment covering 109–119 (PITTPESSSTD) has biased composition (polar residues).

Belongs to the mitochondrion-specific ribosomal protein mL58 family. Component of the mitochondrial large ribosomal subunit (mt-LSU). Mature N.crassa 74S mitochondrial ribosomes consist of a small (37S) and a large (54S) subunit. The 37S small subunit contains a 16S ribosomal RNA (16S mt-rRNA) and 32 different proteins. The 54S large subunit contains a 23S rRNA (23S mt-rRNA) and 42 different proteins.

It localises to the mitochondrion. Functionally, component of the mitochondrial ribosome (mitoribosome), a dedicated translation machinery responsible for the synthesis of mitochondrial genome-encoded proteins, including at least some of the essential transmembrane subunits of the mitochondrial respiratory chain. The mitoribosomes are attached to the mitochondrial inner membrane and translation products are cotranslationally integrated into the membrane. The sequence is that of Large ribosomal subunit protein mL58 (mrpl20) from Neurospora crassa (strain ATCC 24698 / 74-OR23-1A / CBS 708.71 / DSM 1257 / FGSC 987).